The sequence spans 146 residues: Copper transporter 5 (146 aa).

Residues 24-44 (WLSYILTLIACFVFSAFYQYL) form a helical membrane-spanning segment. A disordered region spans residues 55-74 (SSSRRAPPPPRSSSGVSAPL). The helical transmembrane segment at 101–121 (LLMLAAMSFNGGVFIAIVVGL) threads the bilayer.

It belongs to the copper transporter (Ctr) (TC 1.A.56) family. SLC31A subfamily. As to expression, highly expressed in leaves and stems and at lower levels in roots and flowers.

The protein localises to the membrane. Functionally, involved in the transport of copper. In Arabidopsis thaliana (Mouse-ear cress), this protein is Copper transporter 5 (COPT5).